A 596-amino-acid chain; its full sequence is Elongation factor 4 (596 aa).

Residues 2–184 form the tr-type G domain; the sequence is KNIRNFSIIA…TIVKNIPSPA (183 aa). Residues 14-19 and 131-134 contribute to the GTP site; these read DHGKST and NKID.

Belongs to the TRAFAC class translation factor GTPase superfamily. Classic translation factor GTPase family. LepA subfamily.

It localises to the cell inner membrane. The enzyme catalyses GTP + H2O = GDP + phosphate + H(+). Functionally, required for accurate and efficient protein synthesis under certain stress conditions. May act as a fidelity factor of the translation reaction, by catalyzing a one-codon backward translocation of tRNAs on improperly translocated ribosomes. Back-translocation proceeds from a post-translocation (POST) complex to a pre-translocation (PRE) complex, thus giving elongation factor G a second chance to translocate the tRNAs correctly. Binds to ribosomes in a GTP-dependent manner. The protein is Elongation factor 4 of Colwellia psychrerythraea (strain 34H / ATCC BAA-681) (Vibrio psychroerythus).